Here is a 239-residue protein sequence, read N- to C-terminus: Ribosomal RNA small subunit methyltransferase G (239 aa).

Residues glycine 78, phenylalanine 83, 129 to 130 (AE), and arginine 148 contribute to the S-adenosyl-L-methionine site.

Belongs to the methyltransferase superfamily. RNA methyltransferase RsmG family.

It is found in the cytoplasm. Functionally, specifically methylates the N7 position of a guanine in 16S rRNA. The polypeptide is Ribosomal RNA small subunit methyltransferase G (Clostridium beijerinckii (strain ATCC 51743 / NCIMB 8052) (Clostridium acetobutylicum)).